The following is a 171-amino-acid chain: Protein BTG1 (171 aa).

The residue at position 159 (serine 159) is a Phosphoserine.

The protein belongs to the BTG family. In terms of assembly, interacts with CNOT7 and CNOT8.

In terms of biological role, anti-proliferative protein. This chain is Protein BTG1 (Btg1), found in Rattus norvegicus (Rat).